Consider the following 487-residue polypeptide: Probable peptidoglycan glycosyltransferase FtsW (487 aa).

9 helical membrane-spanning segments follow: residues 30–50 (VSLILLALSLMAIGLVIVTSA), 71–91 (IYIVLAIGAALTVMQIPMQWW), 93–113 (TSNAWLLLLGLVLLIAVLLVG), 122–142 (WLAIGPITIQAAEPAKLFFFC), 167–187 (VVFFAFAVLLLLQPDLGTVVV), 203–223 (LWQFFGLAFTGGAAVTFLIMF), 282–302 (FIMAILAEELGFAGVLTVLAL), 332–352 (IGIWFSFQTAVNVGASAGILP), and 358–378 (FPLLSYGGSSLIIMAAAVGLL). 2 disordered regions span residues 398–419 (KAKASTSSSRKNKPKTASSAGK) and 444–487 (IDSI…DGYV). Polar residues predominate over residues 401–416 (ASTSSSRKNKPKTASS). Over residues 444–453 (IDSIMDDFAQ) the composition is skewed to acidic residues.

Belongs to the SEDS family. FtsW subfamily.

Its subcellular location is the cell inner membrane. The enzyme catalyses [GlcNAc-(1-&gt;4)-Mur2Ac(oyl-L-Ala-gamma-D-Glu-L-Lys-D-Ala-D-Ala)](n)-di-trans,octa-cis-undecaprenyl diphosphate + beta-D-GlcNAc-(1-&gt;4)-Mur2Ac(oyl-L-Ala-gamma-D-Glu-L-Lys-D-Ala-D-Ala)-di-trans,octa-cis-undecaprenyl diphosphate = [GlcNAc-(1-&gt;4)-Mur2Ac(oyl-L-Ala-gamma-D-Glu-L-Lys-D-Ala-D-Ala)](n+1)-di-trans,octa-cis-undecaprenyl diphosphate + di-trans,octa-cis-undecaprenyl diphosphate + H(+). It functions in the pathway cell wall biogenesis; peptidoglycan biosynthesis. In terms of biological role, peptidoglycan polymerase that is essential for cell division. This Pseudoalteromonas atlantica (strain T6c / ATCC BAA-1087) protein is Probable peptidoglycan glycosyltransferase FtsW.